The primary structure comprises 462 residues: MSITKEFDTIAAISTPLGEGAIGIVRISGTDALKIASKIYRGLRGKDLSAIQSHTLNYGHIVDPDKNEILDEVMLGVMLAPKTFTREDVIEINTHGGIAVTNEILQLILATMDHNAEPGEFTKRAFLNGRVDLTQAEAVMDLIRAKTIKQWIYVSLKQLDGSLKTLINNTRQEILNTLAQVEVNIDYPEYDDVEEMTTTLMREKTQEFQALMENLLRTARRGKILREGLSTAKIGRPNVGKSQLLNNLLREEKAIVTDIEGTTRDVIEEYVNIKGVPLKLVDTAGIRDTDDIVEKIGVERSKKALEEADLVLLVLNSSEPLTLQDRSLLELSKESNRIVLLNKTDLPQKIEVNELPENVIPISVLENENIDKIEERINDIFFDNAGMVEHDATYLSNARHISLIEKAVDSLKAVNEGLELGMPVDLLQVDMTRTWEILGEITGDAAPDELITQLFSQFCLGK.

(6S)-5-formyl-5,6,7,8-tetrahydrofolate is bound by residues Arg26, Glu91, and Arg130. A TrmE-type G domain is found at 228 to 382 (GLSTAKIGRP…IEERINDIFF (155 aa)). Asn238 contributes to the K(+) binding site. Residues 238–243 (NVGKSQ), 257–263 (TDIEGTT), and 282–285 (DTAG) contribute to the GTP site. Residue Ser242 participates in Mg(2+) binding. Thr257, Ile259, and Thr262 together coordinate K(+). Thr263 contributes to the Mg(2+) binding site. Lys462 is a (6S)-5-formyl-5,6,7,8-tetrahydrofolate binding site.

This sequence belongs to the TRAFAC class TrmE-Era-EngA-EngB-Septin-like GTPase superfamily. TrmE GTPase family. As to quaternary structure, homodimer. Heterotetramer of two MnmE and two MnmG subunits. The cofactor is K(+).

It is found in the cytoplasm. Functionally, exhibits a very high intrinsic GTPase hydrolysis rate. Involved in the addition of a carboxymethylaminomethyl (cmnm) group at the wobble position (U34) of certain tRNAs, forming tRNA-cmnm(5)s(2)U34. This Streptococcus agalactiae protein is tRNA modification GTPase MnmE.